Here is a 785-residue protein sequence, read N- to C-terminus: uncharacterized protein (785 aa).

The 93-residue stretch at 1–93 (MSWVMVSPEL…GGAYAAAEAA (93 aa)) folds into the PE domain.

This sequence belongs to the mycobacterial PE family. PGRS subfamily.

This is an uncharacterized protein from Mycobacterium tuberculosis (strain CDC 1551 / Oshkosh).